The following is a 302-amino-acid chain: NAD kinase 2 (302 aa).

Residue Asp-78 is the Proton acceptor of the active site. NAD(+) is bound by residues 78–79 (DG), 152–153 (NE), Asp-182, 193–198 (TAYALS), and Ala-217.

The protein belongs to the NAD kinase family. It depends on a divalent metal cation as a cofactor.

Its subcellular location is the cytoplasm. The enzyme catalyses NAD(+) + ATP = ADP + NADP(+) + H(+). In terms of biological role, involved in the regulation of the intracellular balance of NAD and NADP, and is a key enzyme in the biosynthesis of NADP. Catalyzes specifically the phosphorylation on 2'-hydroxyl of the adenosine moiety of NAD to yield NADP. This is NAD kinase 2 from Parasynechococcus marenigrum (strain WH8102).